A 180-amino-acid chain; its full sequence is Epididymal-specific lipocalin-6 (180 aa).

The signal sequence occupies residues 1 to 20; sequence MGGLLLAALLALVAVPRAQA. Cysteines 81 and 174 form a disulfide.

Belongs to the calycin superfamily. Lipocalin family.

It is found in the secreted. Functionally, may play a role in male fertility. The chain is Epididymal-specific lipocalin-6 (LCN6) from Macaca mulatta (Rhesus macaque).